The primary structure comprises 691 residues: Calcium-binding and coiled-coil domain-containing protein 1 (691 aa).

A p300 KIX-binding region spans residues 1–30 (MEESPLSRAPSRGGVNFLNVARTYIPNTKV). The interval 1–190 (MEESPLSRAP…VQELERALAT (190 aa)) is N-terminal AD (CTNNB1 binding site). Position 4 is a phosphoserine (serine 4). The interval 45–125 (SDWIGIFKVE…FQFREPRPMD (81 aa)) is interaction with GATA1. Coiled coils occupy residues 145 to 205 (KATV…YKGI), 232 to 339 (ELED…AELE), and 417 to 514 (QSVE…ADEK). Residues 501–691 (RKLEARLEKV…FSTQDPFTFE (191 aa)) are C-terminal AD (CTNNB1 binding site); interaction with CCAR1. Residues 514 to 606 (KWNEDATTED…SEAEDEKSVL (93 aa)) are disordered. The UBZ1-type zinc finger occupies 653–679 (WKECPICKERFPAESDKDALEDHMDGH). 4 residues coordinate Zn(2+): cysteine 656, cysteine 659, histidine 675, and histidine 679.

It belongs to the CALCOCO family. In terms of assembly, part of a calphoglin complex consisting of CALCOCO1, PPA1 and PGM. Interacts with the bHLH-PAS domains of GRIP1, AHR and ARNT. Interacts with CTNNB1 via both its N- and C-terminal regions. Interacts with EP300. Interacts with CCAR1 (via N-terminus) and GATA1.

It localises to the cytoplasm. Its subcellular location is the nucleus. Functions as a coactivator for aryl hydrocarbon and nuclear receptors (NR). Recruited to promoters through its contact with the N-terminal basic helix-loop-helix-Per-Arnt-Sim (PAS) domain of transcription factors or coactivators, such as NCOA2. During ER-activation acts synergistically in combination with other NCOA2-binding proteins, such as EP300, CREBBP and CARM1. Involved in the transcriptional activation of target genes in the Wnt/CTNNB1 pathway. Functions as a secondary coactivator in LEF1-mediated transcriptional activation via its interaction with CTNNB1. Coactivator function for nuclear receptors and LEF1/CTNNB1 involves differential utilization of two different activation regions. In association with CCAR1 enhances GATA1- and MED1-mediated transcriptional activation from the gamma-globin promoter during erythroid differentiation of K562 erythroleukemia cells. Functionally, seems to enhance inorganic pyrophosphatase thus activating phosphogluomutase (PMG). Probably functions as a component of the calphoglin complex, which is involved in linking cellular metabolism (phosphate and glucose metabolism) with other core functions including protein synthesis and degradation, calcium signaling and cell growth. The chain is Calcium-binding and coiled-coil domain-containing protein 1 (CALCOCO1) from Homo sapiens (Human).